Reading from the N-terminus, the 701-residue chain is MARITPITQYRNIGISAHIDAGKTTTTERILFYTGVNHKLGEVHDGAATMDWMVQEQERGITITSAATTTFWSGMAKQFLSHRINIIDTPGHVDFTIEVERSMRVLDGVVMIYCAVGGVQPQSETVWRQANKYKIPRIAFINKMDRTGADFLKVVNQISTRLHVISVPIQLSIGSEENFQGIVDLVKMKAIRWSEHDQGITFKYYDIPKDLLQLANKWHMNLVEVAAEADDELMEKYLQYDDLEEKDIKIGLRKRALNNEIILITCGSAFKNKGVQALLDAIIEYLPSPKDSYKTKNFINQKDSIKNYRYADDKQPFSALAFKIASDSFVGNLTFFRVYSGIVRSGDVVLNSVKDHTERFGRIVQMHANKREEIREVRAGDIAAAIGLKNVTTGDTLCDVNHPIVLEKMDFPEPVISIAVEPKTKIDQEKMGLSLNRLAKEDPSFRVRIDHESNQTIISGMGELHLEIIIDRMRREFKVDANIGKPQVAYRETILNKIENVSGKYIKQSGGRGQYGHVVIDIFPLKPNKSGYLFVNDIKGGVIPGEYISSIDKGIQEQLKSGPLAGYPVVDIGVRLHDGSYHDVDSSELAFKLAASHAFKSAFKLANPILLEPIMHVEVETPEEYMGDVIGDINRRRGIIEGMVDDMIGGKSIKAFVPLSEMFGYATDLRSKTQGRASYSMEFLKYTEAPRSIYDSIVSTQ.

Residues threonine 8–lysine 290 enclose the tr-type G domain. Residues alanine 17–threonine 24, aspartate 88–histidine 92, and asparagine 142–aspartate 145 each bind GTP.

It belongs to the TRAFAC class translation factor GTPase superfamily. Classic translation factor GTPase family. EF-G/EF-2 subfamily.

The protein resides in the cytoplasm. Functionally, catalyzes the GTP-dependent ribosomal translocation step during translation elongation. During this step, the ribosome changes from the pre-translocational (PRE) to the post-translocational (POST) state as the newly formed A-site-bound peptidyl-tRNA and P-site-bound deacylated tRNA move to the P and E sites, respectively. Catalyzes the coordinated movement of the two tRNA molecules, the mRNA and conformational changes in the ribosome. In Buchnera aphidicola subsp. Cinara cedri (strain Cc), this protein is Elongation factor G.